The chain runs to 224 residues: V-type ATP synthase subunit D (224 aa).

A compositionally biased stretch (basic and acidic residues) spans 205 to 214; that stretch reads AKAKQQRKDI. The disordered stretch occupies residues 205–224; sequence AKAKQQRKDIQSGNHGSAAD. The segment covering 215-224 has biased composition (polar residues); the sequence is QSGNHGSAAD.

This sequence belongs to the V-ATPase D subunit family.

Functionally, produces ATP from ADP in the presence of a proton gradient across the membrane. The chain is V-type ATP synthase subunit D from Deinococcus deserti (strain DSM 17065 / CIP 109153 / LMG 22923 / VCD115).